The following is a 500-amino-acid chain: Probable cytosol aminopeptidase (500 aa).

Mn(2+) is bound by residues Lys-264 and Asp-269. Residue Lys-276 is part of the active site. Residues Asp-287, Asp-346, and Glu-348 each contribute to the Mn(2+) site. Arg-350 is an active-site residue.

This sequence belongs to the peptidase M17 family. Mn(2+) is required as a cofactor.

It localises to the cytoplasm. The enzyme catalyses Release of an N-terminal amino acid, Xaa-|-Yaa-, in which Xaa is preferably Leu, but may be other amino acids including Pro although not Arg or Lys, and Yaa may be Pro. Amino acid amides and methyl esters are also readily hydrolyzed, but rates on arylamides are exceedingly low.. The catalysed reaction is Release of an N-terminal amino acid, preferentially leucine, but not glutamic or aspartic acids.. In terms of biological role, presumably involved in the processing and regular turnover of intracellular proteins. Catalyzes the removal of unsubstituted N-terminal amino acids from various peptides. The chain is Probable cytosol aminopeptidase from Rhodopseudomonas palustris (strain TIE-1).